The primary structure comprises 345 residues: Ferrochelatase (345 aa).

Fe cation-binding residues include H215 and E296.

The protein belongs to the ferrochelatase family.

The protein resides in the cytoplasm. It catalyses the reaction heme b + 2 H(+) = protoporphyrin IX + Fe(2+). It functions in the pathway porphyrin-containing compound metabolism; protoheme biosynthesis; protoheme from protoporphyrin-IX: step 1/1. In terms of biological role, catalyzes the ferrous insertion into protoporphyrin IX. Essential for normal nodule development. The sequence is that of Ferrochelatase from Bradyrhizobium diazoefficiens (strain JCM 10833 / BCRC 13528 / IAM 13628 / NBRC 14792 / USDA 110).